The following is a 380-amino-acid chain: Chaperone protein DnaJ (380 aa).

Residues 5–70 form the J domain; the sequence is DFYETLGVSK…QKRAAYDRFG (66 aa). Residues 141–219 form a CR-type zinc finger; sequence GKTAQIRVPT…CHGQGRVTEE (79 aa). Zn(2+)-binding residues include C154, C157, C171, C174, C193, C196, C207, and C210. CXXCXGXG motif repeat units lie at residues 154 to 161, 171 to 178, 193 to 200, and 207 to 214; these read CEVCSGSG, CATCQGSG, CPTCQGRG, and CGKCHGQG.

It belongs to the DnaJ family. As to quaternary structure, homodimer. Requires Zn(2+) as cofactor.

Its subcellular location is the cytoplasm. In terms of biological role, participates actively in the response to hyperosmotic and heat shock by preventing the aggregation of stress-denatured proteins and by disaggregating proteins, also in an autonomous, DnaK-independent fashion. Unfolded proteins bind initially to DnaJ; upon interaction with the DnaJ-bound protein, DnaK hydrolyzes its bound ATP, resulting in the formation of a stable complex. GrpE releases ADP from DnaK; ATP binding to DnaK triggers the release of the substrate protein, thus completing the reaction cycle. Several rounds of ATP-dependent interactions between DnaJ, DnaK and GrpE are required for fully efficient folding. Also involved, together with DnaK and GrpE, in the DNA replication of plasmids through activation of initiation proteins. This Allorhizobium ampelinum (strain ATCC BAA-846 / DSM 112012 / S4) (Agrobacterium vitis (strain S4)) protein is Chaperone protein DnaJ.